We begin with the raw amino-acid sequence, 194 residues long: Cytochrome bo(3) ubiquinol oxidase subunit 3 (194 aa).

At 1-18 (MKKKYKIDTNIFSKELLG) the chain is on the cytoplasmic side. A helical membrane pass occupies residues 19-41 (FWLYLMSDCIIFCTLFSVYFILV). The Extracellular portion of the chain corresponds to 42 to 55 (DNVAQGPSGHNIFQ). A helical membrane pass occupies residues 56–78 (NNLIIIETFLLLFSSFSCNLVLF). Residues 79–84 (EMKNKN) are Cytoplasmic-facing. A helical membrane pass occupies residues 85-107 (LYMVFLWLGITFLLGLLFVFLEL). The Extracellular segment spans residues 108 to 126 (FEFFHLINLGFGPTRSGFL). The chain crosses the membrane as a helical span at residues 127-149 (SSFFVLIATHGIHVISGLIWIIV). Over 150–169 (MIKYVYTFNITNLIYYRMLC) the chain is Cytoplasmic. Residues 170-192 (LNLFWHFLDIVWVFIFSFVYLFG) traverse the membrane as a helical segment. At 193 to 194 (MV) the chain is on the extracellular side.

The protein belongs to the cytochrome c oxidase subunit 3 family. Heterooctamer of two A chains, two B chains, two C chains and two D chains.

It is found in the cell membrane. In terms of biological role, cytochrome bo(3) ubiquinol terminal oxidase is the component of the aerobic respiratory chain of E.coli that predominates when cells are grown at high aeration. Has proton pump activity across the membrane in addition to electron transfer, pumping 2 protons/electron. The protein is Cytochrome bo(3) ubiquinol oxidase subunit 3 (cyoC) of Buchnera aphidicola subsp. Baizongia pistaciae (strain Bp).